A 485-amino-acid chain; its full sequence is Palmitoyltransferase ZDHHC1 (485 aa).

The disordered stretch occupies residues 1–41 (MYKMNICNKPSNKTAPEKSVWTAPAQPSGPSPELQGQRSRR). At 1–52 (MYKMNICNKPSNKTAPEKSVWTAPAQPSGPSPELQGQRSRRNGWSWPPHPLQ) the chain is on the cytoplasmic side. The interval 1 to 271 (MYKMNICNKP…GHLLCFHIYL (271 aa)) is mediates interaction with STING1. A helical transmembrane segment spans residues 53-73 (IVAWLLYLFFAVIGFGILVPL). The Lumenal portion of the chain corresponds to 74–77 (LPHH). The chain crosses the membrane as a helical span at residues 78-98 (WVPAGYACMGAIFAGHLVVHL). At 99–185 (TAVSIDPADA…YRLFLHSVAS (87 aa)) the chain is on the cytoplasmic side. The 51-residue stretch at 134-184 (LHCNLCNVDVSARSKHCSACNKCVCGFDHHCKWLNNCVGERNYRLFLHSVA) folds into the DHHC domain. The active-site S-palmitoyl cysteine intermediate is the Cys-164. Residues 186–206 (ALLGVLLLVLVATYVFVEFFV) form a helical membrane-spanning segment. The Lumenal segment spans residues 207-241 (NPMRLRTNRHFEVLKNHTDVWFVFLPAAPVETQAP). The helical transmembrane segment at 242-262 (AILALAALLILLGLLSTALLG) threads the bilayer. Residues 263 to 485 (HLLCFHIYLM…RGRRVRPPFS (223 aa)) lie on the Cytoplasmic side of the membrane. Disordered regions lie at residues 324 to 358 (EPPG…GPPV) and 462 to 485 (LWPP…PPFS). Over residues 475–485 (WRGRRVRPPFS) the composition is skewed to basic residues.

The protein belongs to the DHHC palmitoyltransferase family. As to quaternary structure, interacts with STING1; ZDHHC1 constitutively interacts with STING1 and in presence of DNA viruses activates it by promoting its cGAMP-induced oligomerization and the recruitment of downstream signaling components. As to expression, widely expressed with significant expression in heart, brain, placenta, lung, liver, kidney, testis, thymus and small intestine. Expressed at lower levels in adult pancreas and lung.

The protein localises to the endosome membrane. It localises to the endoplasmic reticulum membrane. Its subcellular location is the golgi apparatus. The catalysed reaction is L-cysteinyl-[protein] + hexadecanoyl-CoA = S-hexadecanoyl-L-cysteinyl-[protein] + CoA. Its function is as follows. Palmitoyltransferase that catalyzes the addition of palmitate onto various protein substrates, such as NCDN and NLRP3. Has a palmitoyltransferase activity toward NCDN and regulates NCDN association with endosome membranes through this palmitoylation. Acts as an activator of the NLRP3 inflammasome by mediating palmitoylation of 'Cys-130' and 'Cys-958' of NLRP3, thereby promoting NLRP3 phosphorylation and activation by NEK7. Functionally, also has a palmitoyltransferase activity-independent function in DNA virus-triggered and CGAS-mediated innate immune response. Functions as an activator of STING1 by promoting its cGAMP-induced oligomerization and the recruitment of downstream signaling components. This is Palmitoyltransferase ZDHHC1 from Homo sapiens (Human).